Consider the following 651-residue polypeptide: Tudor domain-containing protein 3 (651 aa).

Residues 147 to 189 form a disordered region; that stretch reads TKTFGGGGGGVRSHLNIGAGGHRNREVSQKEKASKSESKNEGV. Basic and acidic residues predominate over residues 169–189; that stretch reads RNREVSQKEKASKSESKNEGV. The region spanning 193–233 is the UBA domain; sequence LVDEKALKHITEMGFSKEASRQALMDNANNLEAALNVLLNS. 3 disordered regions span residues 234 to 272, 306 to 371, and 384 to 459; these read SKQK…APST, TEQN…DVWA, and YDRT…RKSR. At Ser-256 the chain carries Phosphoserine. A compositionally biased stretch (basic and acidic residues) spans 321-338; sequence PRNDPRQPRNEKPPRFQR. Residues 339–352 are compositionally biased toward polar residues; it reads DTPNLKSALENSVL. Ser-345 carries the phosphoserine modification. A Glycyl lysine isopeptide (Lys-Gly) (interchain with G-Cter in SUMO2) cross-link involves residue Lys-470. Residues 555 to 615 form the Tudor domain; that stretch reads MWKPGDECFA…KPVQTEAWEE (61 aa). Residues 624 to 633 are compositionally biased toward basic and acidic residues; that stretch reads EFRRGGDGQP. Residues 624–651 form a disordered region; sequence EFRRGGDGQPRRSTRPTQQFYQPPRARN. The segment at 631–651 is EBM motif; may mediate interaction with the EJC; that stretch reads GQPRRSTRPTQQFYQPPRARN.

In terms of assembly, component of mRNA stress granules. Interacts with FMR1, FXR1, FXR2, EWSR1, FUS, SERBP1, EEF1A1 and DDX3X or DDX3Y, and with the small nuclear ribonucleoprotein-associated proteins SNRPB and SNRPN. Interacts with 'Lys-48'-linked tetra-ubiquitin, but not with monoubiquitin or 'Lys-63'-linked ubiquitin chains. May interact with the exon junction complex (EJC) composed at least of CASC3, EIF4A3, MAGOH and RBM8A. Interacts with POLR2A (via the C-terminal domain (CTD)).

It localises to the cytoplasm. Its subcellular location is the nucleus. In terms of biological role, scaffolding protein that specifically recognizes and binds dimethylarginine-containing proteins. Plays a role in the regulation of translation of target mRNAs by binding Arg/Gly-rich motifs (GAR) in dimethylarginine-containing proteins. In nucleus, acts as a coactivator: recognizes and binds asymmetric dimethylation on the core histone tails associated with transcriptional activation (H3R17me2a and H4R3me2a) and recruits proteins at these arginine-methylated loci. In cytoplasm, acts as an antiviral factor that participates in the assembly of stress granules together with G3BP1. The chain is Tudor domain-containing protein 3 (Tdrd3) from Rattus norvegicus (Rat).